We begin with the raw amino-acid sequence, 498 residues long: ATP synthase subunit beta, chloroplastic (498 aa).

An ATP-binding site is contributed by 172 to 179; sequence GGAGVGKT.

The protein belongs to the ATPase alpha/beta chains family. As to quaternary structure, F-type ATPases have 2 components, CF(1) - the catalytic core - and CF(0) - the membrane proton channel. CF(1) has five subunits: alpha(3), beta(3), gamma(1), delta(1), epsilon(1). CF(0) has four main subunits: a(1), b(1), b'(1) and c(9-12).

Its subcellular location is the plastid. The protein resides in the chloroplast thylakoid membrane. The catalysed reaction is ATP + H2O + 4 H(+)(in) = ADP + phosphate + 5 H(+)(out). In terms of biological role, produces ATP from ADP in the presence of a proton gradient across the membrane. The catalytic sites are hosted primarily by the beta subunits. This is ATP synthase subunit beta, chloroplastic from Phormium tenax (New Zealand flax).